A 253-amino-acid chain; its full sequence is Imidazole glycerol phosphate synthase subunit HisF (253 aa).

Catalysis depends on residues Asp-11 and Asp-130.

The protein belongs to the HisA/HisF family. Heterodimer of HisH and HisF.

The protein resides in the cytoplasm. It catalyses the reaction 5-[(5-phospho-1-deoxy-D-ribulos-1-ylimino)methylamino]-1-(5-phospho-beta-D-ribosyl)imidazole-4-carboxamide + L-glutamine = D-erythro-1-(imidazol-4-yl)glycerol 3-phosphate + 5-amino-1-(5-phospho-beta-D-ribosyl)imidazole-4-carboxamide + L-glutamate + H(+). It participates in amino-acid biosynthesis; L-histidine biosynthesis; L-histidine from 5-phospho-alpha-D-ribose 1-diphosphate: step 5/9. Its function is as follows. IGPS catalyzes the conversion of PRFAR and glutamine to IGP, AICAR and glutamate. The HisF subunit catalyzes the cyclization activity that produces IGP and AICAR from PRFAR using the ammonia provided by the HisH subunit. This is Imidazole glycerol phosphate synthase subunit HisF from Clostridium beijerinckii (strain ATCC 51743 / NCIMB 8052) (Clostridium acetobutylicum).